Here is a 338-residue protein sequence, read N- to C-terminus: RNA 3'-terminal phosphate cyclase (338 aa).

Residues Gln-103 and 283–287 (YLADQ) each bind ATP. The Tele-AMP-histidine intermediate role is filled by His-308.

The protein belongs to the RNA 3'-terminal cyclase family. Type 1 subfamily.

The protein localises to the cytoplasm. The catalysed reaction is a 3'-end 3'-phospho-ribonucleotide-RNA + ATP = a 3'-end 2',3'-cyclophospho-ribonucleotide-RNA + AMP + diphosphate. Catalyzes the conversion of 3'-phosphate to a 2',3'-cyclic phosphodiester at the end of RNA. The mechanism of action of the enzyme occurs in 3 steps: (A) adenylation of the enzyme by ATP; (B) transfer of adenylate to an RNA-N3'P to produce RNA-N3'PP5'A; (C) and attack of the adjacent 2'-hydroxyl on the 3'-phosphorus in the diester linkage to produce the cyclic end product. The biological role of this enzyme is unknown but it is likely to function in some aspects of cellular RNA processing. The chain is RNA 3'-terminal phosphate cyclase from Escherichia coli (strain K12 / MC4100 / BW2952).